A 141-amino-acid polypeptide reads, in one-letter code: Hemoglobin subunit alpha (141 aa).

The region spanning Val-1 to Arg-141 is the Globin domain. The residue at position 3 (Ser-3) is a Phosphoserine. At Lys-7 the chain carries N6-succinyllysine. Phosphothreonine is present on Thr-8. Lys-11 is subject to N6-succinyllysine. Lys-16 carries the N6-acetyllysine; alternate modification. Lys-16 carries the post-translational modification N6-succinyllysine; alternate. Tyr-24 carries the post-translational modification Phosphotyrosine. Residue Ser-35 is modified to Phosphoserine. An N6-succinyllysine modification is found at Lys-40. Ser-49 bears the Phosphoserine mark. Position 58 (His-58) interacts with O2. His-87 is a binding site for heme b. A Phosphoserine modification is found at Ser-102. Phosphothreonine is present on Thr-108. 2 positions are modified to phosphoserine: Ser-124 and Ser-131. Phosphothreonine occurs at positions 134 and 137. Ser-138 carries the post-translational modification Phosphoserine.

It belongs to the globin family. In terms of assembly, heterotetramer of two alpha chains and two beta chains. As to expression, red blood cells.

In terms of biological role, involved in oxygen transport from the lung to the various peripheral tissues. Its function is as follows. Hemopressin acts as an antagonist peptide of the cannabinoid receptor CNR1. Hemopressin-binding efficiently blocks cannabinoid receptor CNR1 and subsequent signaling. The polypeptide is Hemoglobin subunit alpha (HBA) (Semnopithecus entellus (Northern plains gray langur)).